The following is a 186-amino-acid chain: ADP-ribosylation factor-like protein 8B (186 aa).

Positions M1 to E19 form an intramembrane region, note=Mediates targeting to membranes. GTP-binding positions include Q29–T35, D71–Q75, and N130–D133. Residue K141 forms a Glycyl lysine isopeptide (Lys-Gly) (interchain with G-Cter in ubiquitin) linkage.

This sequence belongs to the small GTPase superfamily. Arf family. Interacts with tubulin. Interacts with BORCS5; recruits ARL8B to lysosomes. Interacts with VPS41; the interaction mediates the recruitment of the HOPS complex to lysosomes. Interacts (GTP-bound form) with PLEKHM2 (via RUN domain); the interaction is required to recruit the motor protein kinesin-1 on lysosomes. Interacts (GTP-bound form) with PLEKHM1 (via RUN domain); the interaction is required for PLEKHM1 localization to lysosomes and for ARL8B function in delivery and degradation of endocytic and autophagic cargo in lysosomes. PLEKHM1 and PLEKHM2 compete for interaction with ARL8B. Interacts (GTP-bound form) with RUFY1; the interaction is required for RUFY1 endosomal location. When GTP-bound, interacts with RUFY3 and RUFY4, but not with RUFY1, nor RUFY2. In terms of processing, ubiquitinated at Lys-141 by RNF167, leading to its degradation.

It is found in the late endosome membrane. It localises to the lysosome membrane. Its subcellular location is the cytoplasm. The protein localises to the cytoskeleton. The protein resides in the spindle. It is found in the cell projection. It localises to the axon. Its subcellular location is the synapse. The protein localises to the cytolytic granule membrane. The protein resides in the early endosome membrane. The catalysed reaction is GTP + H2O = GDP + phosphate + H(+). Its function is as follows. Small GTPase which cycles between active GTP-bound and inactive GDP-bound states. In its active state, binds to a variety of effector proteins playing a key role in the regulation of lysosomal positioning which is important for nutrient sensing, natural killer cell-mediated cytotoxicity and antigen presentation. Along with its effectors, orchestrates lysosomal transport and fusion. Localizes specifically to lysosomal membranes and mediates anterograde lysosomal motility by recruiting PLEKHM2, which in turn recruits the motor protein kinesin-1 on lysosomes. Required for lysosomal and cytolytic granule exocytosis. Critical factor involved in NK cell-mediated cytotoxicity. Drives the polarization of cytolytic granules and microtubule-organizing centers (MTOCs) toward the immune synapse between effector NK lymphocytes and target cells. In neurons, mediates the anterograde axonal long-range transport of presynaptic lysosome-related vesicles required for presynaptic biogenesis and synaptic function. Also acts as a regulator of endosome to lysosome trafficking pathways of special significance for host defense. Recruits RUFY1 onto early endosomes regulating endosomes to trans-Golgi network proteins retrieval. Regulates cargo trafficking to lysosomes by binding to PLEKHM1 and recruiting the HOPS subunit VPS41, resulting in functional assembly of the HOPS complex on lysosomal membranes. Plays an important role in cargo delivery to lysosomes for antigen presentation and microbial killing. Directs the intersection of CD1d with lipid antigens in lysosomes, and plays a role in intersecting phagosomes with lysosomes to generate phagolysosomes that kill microbes. Involved in the process of MHC II presentation. Regulates the delivery of antigens to lysosomes and the formation of MHC II-peptide complexes through the recruitment of the HOPS complex to lysosomes allowing the fusion of late endosomes to lysosomes. May play a role in chromosome segregation. The chain is ADP-ribosylation factor-like protein 8B (ARL8B) from Pongo abelii (Sumatran orangutan).